The sequence spans 268 residues: Phosphatidylglycerol--prolipoprotein diacylglyceryl transferase (268 aa).

7 helical membrane passes run 27–47 (PALR…MWLL), 66–86 (LLFY…VLFY), 104–124 (GGMS…YIAW), 130–150 (FFAV…AGRI), 181–201 (PSQL…LYWF), 208–228 (VGAV…IVET), and 242–262 (FMTM…YLIL). A 1,2-diacyl-sn-glycero-3-phospho-(1'-sn-glycerol) is bound at residue arginine 149.

It belongs to the Lgt family.

It is found in the cell inner membrane. It carries out the reaction L-cysteinyl-[prolipoprotein] + a 1,2-diacyl-sn-glycero-3-phospho-(1'-sn-glycerol) = an S-1,2-diacyl-sn-glyceryl-L-cysteinyl-[prolipoprotein] + sn-glycerol 1-phosphate + H(+). Its pathway is protein modification; lipoprotein biosynthesis (diacylglyceryl transfer). Its function is as follows. Catalyzes the transfer of the diacylglyceryl group from phosphatidylglycerol to the sulfhydryl group of the N-terminal cysteine of a prolipoprotein, the first step in the formation of mature lipoproteins. This chain is Phosphatidylglycerol--prolipoprotein diacylglyceryl transferase, found in Shewanella sp. (strain MR-4).